Consider the following 258-residue polypeptide: UPF0246 protein Pnuc_0753 (258 aa).

This sequence belongs to the UPF0246 family.

This Polynucleobacter asymbioticus (strain DSM 18221 / CIP 109841 / QLW-P1DMWA-1) (Polynucleobacter necessarius subsp. asymbioticus) protein is UPF0246 protein Pnuc_0753.